The chain runs to 178 residues: MSTLIASRRYASALLSAAEEGNFLNQIVDELHVIKEVLEHSRDLVYALRSPLVKGDRKIHILEEIFKDSVGEKMFLFLRLVAHKKRAGLLPEIIDEFQILLDEKRGVINVDITSATALSDEQTAELVTKLAAFTGKEIRPRMAINEQFIGGVAVKIGDTIYDGSISHQLQMLRKSLVS.

The protein belongs to the ATPase delta chain family. As to quaternary structure, F-type ATPases have 2 components, F(1) - the catalytic core - and F(0) - the membrane proton channel. F(1) has five subunits: alpha(3), beta(3), gamma(1), delta(1), epsilon(1). F(0) has three main subunits: a(1), b(2) and c(10-14). The alpha and beta chains form an alternating ring which encloses part of the gamma chain. F(1) is attached to F(0) by a central stalk formed by the gamma and epsilon chains, while a peripheral stalk is formed by the delta and b chains.

The protein resides in the cell inner membrane. Functionally, f(1)F(0) ATP synthase produces ATP from ADP in the presence of a proton or sodium gradient. F-type ATPases consist of two structural domains, F(1) containing the extramembraneous catalytic core and F(0) containing the membrane proton channel, linked together by a central stalk and a peripheral stalk. During catalysis, ATP synthesis in the catalytic domain of F(1) is coupled via a rotary mechanism of the central stalk subunits to proton translocation. In terms of biological role, this protein is part of the stalk that links CF(0) to CF(1). It either transmits conformational changes from CF(0) to CF(1) or is implicated in proton conduction. The polypeptide is ATP synthase subunit delta (Pelodictyon phaeoclathratiforme (strain DSM 5477 / BU-1)).